Consider the following 397-residue polypeptide: Acetate kinase (397 aa).

Position 7 (Asn7) interacts with Mg(2+). Lys14 is a binding site for ATP. Arg91 serves as a coordination point for substrate. Asp148 (proton donor/acceptor) is an active-site residue. Residues 208 to 212 (HLGNG), 283 to 285 (DLR), and 331 to 335 (GVGEN) contribute to the ATP site. Glu384 provides a ligand contact to Mg(2+).

Belongs to the acetokinase family. As to quaternary structure, homodimer. It depends on Mg(2+) as a cofactor. Mn(2+) serves as cofactor.

It is found in the cytoplasm. The catalysed reaction is acetate + ATP = acetyl phosphate + ADP. It functions in the pathway metabolic intermediate biosynthesis; acetyl-CoA biosynthesis; acetyl-CoA from acetate: step 1/2. Functionally, catalyzes the formation of acetyl phosphate from acetate and ATP. Can also catalyze the reverse reaction. This is Acetate kinase from Syntrophomonas wolfei subsp. wolfei (strain DSM 2245B / Goettingen).